The following is a 401-amino-acid chain: Phosphoglycerate kinase 3, cytosolic (401 aa).

11 residues coordinate (2R)-3-phosphoglycerate: valine 24, aspartate 25, asparagine 27, arginine 41, serine 63, histidine 64, glycine 66, arginine 67, arginine 122, histidine 154, and arginine 155. Glycine 200 contributes to the ADP binding site. Glycine 200 contributes to the CDP binding site. The AMP site is built by lysine 202 and lysine 206. Lysine 206 is a binding site for ATP. Glycine 224 serves as a coordination point for ADP. Residue glycine 224 participates in CDP binding. AMP contacts are provided by glycine 225 and glycine 297. ATP contacts are provided by glycine 225, glycine 297, and asparagine 321. 2 residues coordinate CDP: glycine 322 and phenylalanine 327. An ADP-binding site is contributed by phenylalanine 327. Residue glutamate 328 coordinates AMP. ATP is bound by residues glutamate 328, aspartate 359, and serine 360. Aspartate 359 is a binding site for Mg(2+).

This sequence belongs to the phosphoglycerate kinase family. In terms of assembly, monomer. The cofactor is Mg(2+). In terms of tissue distribution, expressed in roots, leaves and inflorescence.

The protein resides in the cytoplasm. The catalysed reaction is (2R)-3-phosphoglycerate + ATP = (2R)-3-phospho-glyceroyl phosphate + ADP. It functions in the pathway carbohydrate degradation; glycolysis; pyruvate from D-glyceraldehyde 3-phosphate: step 2/5. This is Phosphoglycerate kinase 3, cytosolic from Arabidopsis thaliana (Mouse-ear cress).